Reading from the N-terminus, the 588-residue chain is Adenine deaminase (588 aa).

It belongs to the metallo-dependent hydrolases superfamily. Adenine deaminase family. As to quaternary structure, homodimer. Mn(2+) is required as a cofactor.

It carries out the reaction adenine + H2O + H(+) = hypoxanthine + NH4(+). In Escherichia coli O157:H7 (strain EC4115 / EHEC), this protein is Adenine deaminase.